Consider the following 245-residue polypeptide: UPF0246 protein LBUL_1917 (245 aa).

It belongs to the UPF0246 family.

This chain is UPF0246 protein LBUL_1917, found in Lactobacillus delbrueckii subsp. bulgaricus (strain ATCC BAA-365 / Lb-18).